Here is a 185-residue protein sequence, read N- to C-terminus: Putative lipoprotein LprB (185 aa).

The signal sequence occupies residues 1–24; sequence MRRKVRRLTLAVSALVALFPAVAG. A lipid anchor (N-palmitoyl cysteine) is attached at C25. Residue C25 is the site of S-diacylglycerol cysteine attachment. The segment at 26 to 50 is disordered; sequence SDSGDNKPGATIPSTPANAEGRHGP.

It localises to the cell membrane. In Mycobacterium bovis (strain ATCC BAA-935 / AF2122/97), this protein is Putative lipoprotein LprB (lprB).